Reading from the N-terminus, the 689-residue chain is MTEYSLPTMNLWNNSTSDDNVSMMEAFMSSDLSFWATNNSTSAAVVGVNSNLPHASSNTPSVFAPSSSTSASTLSAAATVDASKSMPFFNQETLQQRLQALIDGARETWTYAIFWQSSVVDFSSPSVLGWGDGYYKGEEDKAKRKLSVSSPAYIAEQEHRKKVLRELNSLISGAPPGTDDAVDEEVTDTEWFFLISMTQSFVNGSGLPGQALYSSSPIWVAGTEKLAASHCERVRQAQGFGLQTIVCIPSANGVVELGSTELIVQSSDLMNKVRVLFNFSNDLGSGSWAVQPESDPSALWLTDPSSSGMEVRESLNTVQTNSVPSSNSNKQIAYGNENNHPSGNGQSCYNQQQQKNPPQQQTQGFFTRELNFSEFGFDGSSNRNGNSSVSCKPESGEILNFGDSTKKSASSANVNLFTGQSQFGAGEENNNKNKKRSATSRGSNEEGMLSFVSGTVLPSSGMKSGGGGGEDSEHSDLEASVVKEADSSRVVEPEKRPRKRGRKPANGREEPLNHVEAERQRREKLNQRFYALRAVVPNVSKMDKASLLGDAISYINELKSKLQNTESDKEDLKSQIEDLKKESRRPGPPPPPNQDLKMSSHTGGKIVDVDIDVKIIGWDAMIRIQCNKKNHPAARLMAALMELDLDVHHASVSVVNDLMIQQATVKMGSRHYTEEQLRVALTSKIAETH.

A JAZ-interaction domain region spans residues 94-172; sequence LQQRLQALID…VLRELNSLIS (79 aa). Residues 316-349 show a composition bias toward polar residues; the sequence is NTVQTNSVPSSNSNKQIAYGNENNHPSGNGQSCY. Disordered regions lie at residues 316-361 and 420-519; these read NTVQ…PQQQ and QSQF…EAER. Residues 350–361 are compositionally biased toward low complexity; sequence NQQQQKNPPQQQ. The span at 471 to 495 shows a compositional bias: basic and acidic residues; the sequence is DSEHSDLEASVVKEADSSRVVEPEK. Basic residues predominate over residues 496-505; sequence RPRKRGRKPA. Residues 506–519 show a composition bias toward basic and acidic residues; sequence NGREEPLNHVEAER. The segment at 509–522 is basic motif; degenerate; the sequence is EEPLNHVEAERQRR. In terms of domain architecture, bHLH spans 509–558; that stretch reads EEPLNHVEAERQRREKLNQRFYALRAVVPNVSKMDKASLLGDAISYINEL. The helix-loop-helix motif stretch occupies residues 523–558; sequence EKLNQRFYALRAVVPNVSKMDKASLLGDAISYINEL. The disordered stretch occupies residues 563–602; it reads QNTESDKEDLKSQIEDLKKESRRPGPPPPPNQDLKMSSHT. A compositionally biased stretch (basic and acidic residues) spans 566 to 585; the sequence is ESDKEDLKSQIEDLKKESRR.

In terms of assembly, interacts (via N-terminus) with MED25. Interacts (via N-terminus) with JAZ7. MED25 and JAZ7 compete with each other to bind to MYC2. Interacts (via N-terminus) with MTB1. MTB1 and MED25 compete with each other to bind to MYC2. Expressed at low levels in roots, stems, leaves, flowers and fruits.

The protein localises to the nucleus. In terms of biological role, transcriptional activator that binds to the G-box motif (5'-AACGTG-3') found in the promoter of the jasmonate-induced gene LAPA1. Acts as a negative regulator of blue light-mediated photomorphogenesis and positively regulates root growth. Promotes growth in response to the phytohormones abscisic acid (ABA) and jasmonate (JA). Binds to the G-box motif (5'-CACGTG-3') of the RBCS-3A gene promoter. Acts downstream of the jasmonate (JA) receptor to orchestrate JA-mediated activation of plant responses. Positively regulates both wound-responsive and pathogen-responsive genes through MYC2-targeted transcription factors (MTFs) involved in early response to JA. With JA2L forms a transcription module that regulates wounding-responsive genes. With ERF.C3 forms a transcription module that regulates pathogen-responsive genes. Plays a critical role in orchestrating JA-mediated defense gene expression during Botrytis cinerea infection. Negatively regulates defense responses to root-knot nematodes, potentially by mediating crosstalk among the hormones strigolactones, abscisic acid (ABA) and jasmonate (JA). Regulates the termination of JA-mediated defense responses by specifically binding the G-box (5'-CACATG-3') motifs in the promoters of MTB1, MTB2 and MTB3, which are transcription factors that negatively regulates JA signaling. May be involved in JA-induced chilling tolerance, possibly by ameliorating the antioxidant enzyme system of fruit and increasing proline and lycopene levels. This chain is Transcription factor MYC2, found in Solanum lycopersicum (Tomato).